The sequence spans 516 residues: D-aminopeptidase (516 aa).

Ser-61 serves as the catalytic Nucleophile. Lys-64 acts as the Proton donor/acceptor in catalysis. The segment at 476-486 is important for specificity; sequence RRSMDAPAPGD. Substrate is bound at residue Asp-480.

The protein belongs to the peptidase S12 family. As to quaternary structure, homodimer.

It carries out the reaction Release of an N-terminal D-amino acid from a peptide, Xaa-|-Yaa-, in which Xaa is preferably D-Ala, D-Ser or D-Thr. D-amino acid amides and methyl esters also are hydrolyzed, as is glycine amide.. Inhibited by beta-lactam compounds such as 6-aminopenicillic acid, 7-aminocephalosporanic acid, benzylpenicillin and ampicillin. Inhibited by p-chloromercuribenzoate. Hydrolyzes N-terminal residues in D-amino acid-containing peptides. This chain is D-aminopeptidase, found in Cereibacter sphaeroides (strain ATCC 17029 / ATH 2.4.9) (Rhodobacter sphaeroides).